The chain runs to 481 residues: Proline--tRNA ligase (481 aa).

Belongs to the class-II aminoacyl-tRNA synthetase family. ProS type 3 subfamily. Homodimer.

The protein localises to the cytoplasm. The enzyme catalyses tRNA(Pro) + L-proline + ATP = L-prolyl-tRNA(Pro) + AMP + diphosphate. Catalyzes the attachment of proline to tRNA(Pro) in a two-step reaction: proline is first activated by ATP to form Pro-AMP and then transferred to the acceptor end of tRNA(Pro). This chain is Proline--tRNA ligase, found in Chlorobium phaeobacteroides (strain DSM 266 / SMG 266 / 2430).